Reading from the N-terminus, the 123-residue chain is Small ribosomal subunit protein bS16 (123 aa).

A disordered region spans residues 87 to 123 (VKNNPVKAKPGKRAQERAAEKAQKVADAAAAAADAAE). The span at 99–110 (RAQERAAEKAQK) shows a compositional bias: basic and acidic residues. Over residues 111–123 (VADAAAAAADAAE) the composition is skewed to low complexity.

The protein belongs to the bacterial ribosomal protein bS16 family.

The chain is Small ribosomal subunit protein bS16 from Rhizobium johnstonii (strain DSM 114642 / LMG 32736 / 3841) (Rhizobium leguminosarum bv. viciae).